A 318-amino-acid chain; its full sequence is Myoblast determination protein 1 (318 aa).

Methionine 1 participates in a covalent cross-link: Peptide (Met-Gly) (interchain with G-Cter in ubiquitin). Residue lysine 104 is modified to N6-methyllysine; by EHMT2. The region spanning 109 to 160 is the bHLH domain; sequence DRRKAATMRERRRLSKVNEAFETLKRCTSSNPNQRLPKVEILRNAIRYIEGL. Disordered stretches follow at residues 175-224 and 262-318; these read AAFY…RQNG and SPAA…YQVL. Residues 196-206 show a composition bias toward polar residues; sequence SDASSPRSNCS. Positions 262–271 are enriched in low complexity; the sequence is SPAAPSLLLP. Over residues 272-282 the composition is skewed to pro residues; that stretch reads DAPPESPPGPP. The span at 290 to 304 shows a compositional bias: polar residues; that stretch reads AEQGTQTPSPDSTPQ.

As to quaternary structure, efficient DNA binding requires dimerization with another bHLH protein. Seems to form active heterodimers with ITF-2. Interacts with SUV39H1. Interacts with DDX5. Interacts with CHD2. Interacts with TSC22D3. Interacts with SETD3. Interacts with P-TEFB complex; promotes the transcriptional activity of MYOD1 through its CDK9-mediated phosphorylation. Interacts with CSRP3. Interacts with NUPR1. Post-translationally, phosphorylated by CDK9. This phosphorylation promotes its function in muscle differentiation. Acetylated by a complex containing EP300 and PCAF. The acetylation is essential to activate target genes. Conversely, its deacetylation by SIRT1 inhibits its function. In terms of processing, ubiquitinated on the N-terminus; which is required for proteasomal degradation. Post-translationally, methylation at Lys-104 by EHMT2/G9a inhibits myogenic activity.

The protein localises to the nucleus. Acts as a transcriptional activator that promotes transcription of muscle-specific target genes and plays a role in muscle differentiation. Together with MYF5 and MYOG, co-occupies muscle-specific gene promoter core region during myogenesis. Induces fibroblasts to differentiate into myoblasts. Interacts with and is inhibited by the twist protein. This interaction probably involves the basic domains of both proteins. This chain is Myoblast determination protein 1 (Myod1), found in Rattus norvegicus (Rat).